A 239-amino-acid chain; its full sequence is Ribonuclease HII (239 aa).

The RNase H type-2 domain maps to 30-221 (GPVAGVDEVG…VRRLVTAGTP (192 aa)). 3 residues coordinate a divalent metal cation: Asp-36, Glu-37, and Asp-130.

The protein belongs to the RNase HII family. Mn(2+) serves as cofactor. It depends on Mg(2+) as a cofactor.

Its subcellular location is the cytoplasm. It carries out the reaction Endonucleolytic cleavage to 5'-phosphomonoester.. Functionally, endonuclease that specifically degrades the RNA of RNA-DNA hybrids. The chain is Ribonuclease HII from Mycobacterium sp. (strain JLS).